Consider the following 226-residue polypeptide: Ribonuclease 3 (226 aa).

In terms of domain architecture, RNase III spans 6 to 128 (TKKIQKVLGY…LIGSIYLDSN (123 aa)). Glutamate 41 is a Mg(2+) binding site. Aspartate 45 is a catalytic residue. Asparagine 114 and glutamate 117 together coordinate Mg(2+). The active site involves glutamate 117. In terms of domain architecture, DRBM spans 155–225 (DPKTRLQEYL…AQKALIKLGV (71 aa)).

This sequence belongs to the ribonuclease III family. In terms of assembly, homodimer. It depends on Mg(2+) as a cofactor.

Its subcellular location is the cytoplasm. It carries out the reaction Endonucleolytic cleavage to 5'-phosphomonoester.. Its function is as follows. Digests double-stranded RNA. Involved in the processing of primary rRNA transcript to yield the immediate precursors to the large and small rRNAs (23S and 16S). Processes some mRNAs, and tRNAs when they are encoded in the rRNA operon. Processes pre-crRNA and tracrRNA of type II CRISPR loci if present in the organism. The sequence is that of Ribonuclease 3 from Buchnera aphidicola subsp. Acyrthosiphon pisum (strain 5A).